We begin with the raw amino-acid sequence, 123 residues long: Cliotide T4 (123 aa).

The N-terminal stretch at 1 to 28 is a signal peptide; it reads MASLRIAPLALFFFLAASVMFTVEKTEA. The cyclopeptide (Gly-Asn) cross-link spans 29–58; sequence GIPCGESCVFIPCITAAIGCSCKSKVCYRN. 3 cysteine pairs are disulfide-bonded: Cys-32-Cys-48, Cys-36-Cys-50, and Cys-41-Cys-55. The propeptide at 59 to 123 is removed in mature form; the sequence is HVIAAEAKTM…KDHLKMSITN (65 aa).

Contains 3 disulfide bonds. In terms of processing, this is a cyclic peptide. As to expression, expressed in flower, stem, shoot, root, leaf, seed, pod and nodule (at protein level).

In terms of biological role, probably participates in a plant defense mechanism. Active against Gram-negative bacteria E.coli ATCC 700926 (MIC=1.0 uM), K.pneumoniae ATTC 13883 (MIC=5.5 uM) and P.aeruginosa ATCC 39018 (MIC=7.5 uM). Has hemolytic and cytotoxic activity. The sequence is that of Cliotide T4 from Clitoria ternatea (Butterfly pea).